A 512-amino-acid chain; its full sequence is Acid-sensing ion channel 2 (512 aa).

Residues 1-37 lie on the Cytoplasmic side of the membrane; that stretch reads MDLKESPSEGSLQPSSIQIFANTSTLHGIRHIFVYGP. A phosphoserine mark is found at Ser-8 and Ser-11. A helical membrane pass occupies residues 38–58; it reads LTIRRVLWAVAFVGSLGLLLV. Residues 59–427 are Extracellular-facing; it reads ESSERVSYYF…EQKKAYEVAA (369 aa). 6 disulfide bridges follow: Cys-92/Cys-193, Cys-289/Cys-364, Cys-307/Cys-360, Cys-311/Cys-358, Cys-320/Cys-342, and Cys-322/Cys-334. Asn-365 and Asn-392 each carry an N-linked (GlcNAc...) asparagine glycan. The chain crosses the membrane as a helical span at residues 428–448; the sequence is LLGDIGGQMGLFIGASILTIL. Positions 441–443 match the GAS motif; ion selectivity filter motif; sequence GAS. At 449 to 512 the chain is on the cytoplasmic side; the sequence is ELFDYIYELI…ALGTLEEIAC (64 aa).

Belongs to the amiloride-sensitive sodium channel (TC 1.A.6) family. ASIC2 subfamily. Can form homotrimers. Heterotrimer; forms functional heterotrimers producing channel with different properties. Forms heterotrimers with ASIC1; while ASIC1 determines current amplitude, ASIC2 influences the properties of the current. Forms heterotrimers with ASIC3; resulting in channels with distinct properties. Interacts with STOM; STOM regulates the gating of ASIC2-containing channels. Interacts with PICK1; promotes ASIC3 phosphorylation by PKC and activation of ASIC2/ASIC3 heterotrimers. In terms of tissue distribution, expressed by sensory neurons. Expressed by nociceptive sensory neurons, spiral ganglion (SG) neurons and the retina (at protein level). Expressed in outer nuclear layer of retina (photoreceptors) and to a lower extent in distal and proximal inner nuclear layer.

It is found in the cell membrane. The catalysed reaction is Na(+)(in) = Na(+)(out). The enzyme catalyses K(+)(in) = K(+)(out). It carries out the reaction Li(+)(in) = Li(+)(out). With respect to regulation, inhibited by the diuretic drug amiloride. In terms of biological role, forms pH-gated trimeric sodium channels that act as postsynaptic excitatory sensors in the nervous system. Upon extracellular acidification, these channels generate rapid, transient inward currents that fully desensitize. Highly selective for sodium, they are permeable to other cations. By forming heterotrimeric channels with ASIC1, could contribute to synaptic plasticity, learning, and memory. Additionally, as acid sensors at nerve terminals, plays a role in mechanosensation and phototransduction. Functionally, has no pH-gated sodium channel activity per se but can associate with other ASICs to produce functional channels with specific properties. The chain is Acid-sensing ion channel 2 from Mus musculus (Mouse).